The chain runs to 520 residues: Glucose starvation modulator protein 1 (520 aa).

Positions 20-48 form a DNA-binding region, zn(2)-C6 fungal-type; the sequence is CSFCHSKHLQCSNNRPCKNCVKRNIADQC. 2 disordered regions span residues 63-104 and 194-213; these read AKNK…SSGR and PASP…PNEM. Residues 74–85 show a composition bias toward low complexity; that stretch reads SLESSSSPFSPL. Residues 90 to 104 show a composition bias toward polar residues; sequence INSQSSQPLDPSSGR. The PAS domain occupies 376 to 445; that stretch reads DYEKLSHLNS…FKLFKSVAVG (70 aa).

The protein belongs to the ERT1/acuK family.

The protein localises to the nucleus. In terms of biological role, transcription factor which regulates nonfermentable carbon utilization. The protein is Glucose starvation modulator protein 1 (GSM1) of Meyerozyma guilliermondii (strain ATCC 6260 / CBS 566 / DSM 6381 / JCM 1539 / NBRC 10279 / NRRL Y-324) (Yeast).